We begin with the raw amino-acid sequence, 463 residues long: Mitochondrial dynamics protein MID51 (463 aa).

Residues 1 to 23 (MAGAGERKGKKDDNGIGTAIDFV) are Mitochondrial intermembrane-facing. A helical transmembrane segment spans residues 24-46 (LSNARLVLGVGGAAMLGIATLAV). Topologically, residues 47 to 463 (KRMYDRAISA…LSEPEVLLQT (417 aa)) are cytoplasmic. A dimerization region spans residues 49–195 (MYDRAISAPT…LSGSLYDDLQ (147 aa)). Phosphoserine occurs at positions 55, 59, 79, and 94. A disordered region spans residues 57-77 (PTSPTRLSHSGKRSWEEPNWM). The segment at 160–169 (AAVDICAELR) is important for interaction with DNM1L. Residues Ser-187, Ser-189, and His-201 each coordinate ADP. An important for interaction with DNM1L region spans residues 234-243 (RRENPEYFPR). 3 residues coordinate ADP: Ser-340, Arg-342, and Lys-368.

It belongs to the MID49/MID51 family. Homodimer. Interacts with DNM1L.

It localises to the mitochondrion outer membrane. Its function is as follows. Mitochondrial outer membrane protein which regulates mitochondrial fission/fusion dynamics. Promotes the recruitment and association of the fission mediator dynamin-related protein 1 (DNM1L) to the mitochondrial surface independently of the mitochondrial fission FIS1 and MFF proteins. Regulates DNM1L GTPase activity and DNM1L oligomerization. Binds ADP and can also bind GDP, although with lower affinity. Does not bind CDP, UDP, ATP, AMP or GTP. Inhibits DNM1L GTPase activity in the absence of bound ADP. Requires ADP to stimulate DNM1L GTPase activity and the assembly of DNM1L into long, oligomeric tubules with a spiral pattern, as opposed to the ring-like DNM1L oligomers observed in the absence of bound ADP. Does not require ADP for its function in recruiting DNM1L. This Mus musculus (Mouse) protein is Mitochondrial dynamics protein MID51 (Mief1).